The following is a 135-amino-acid chain: Hemoglobin subunit beta-3 (135 aa).

In terms of domain architecture, Globin spans His-2–Gln-135. Residues His-57 and His-81 each contribute to the heme b site.

Belongs to the globin family. In terms of assembly, hb 3 is a heterotetramer of two alpha and two beta-3 chains. As to expression, red blood cells (at protein level).

Involved in oxygen transport from gills to the various peripheral tissues. The protein is Hemoglobin subunit beta-3 of Somniosus microcephalus (Greenland sleeper shark).